The chain runs to 766 residues: Tetratricopeptide repeat protein 14 (766 aa).

The disordered stretch occupies residues 35–55 (LGTAAEPARGAAPPPGAGRKE). Residues 125–207 (GDIVIGRISS…YHEKLAVSLY (83 aa)) enclose the S1 motif domain. TPR repeat units lie at residues 209 to 242 (SSLPPHMAGIKLGVITSEELPMYYRRSVELNSNS), 306 to 339 (ALKCVKIGVDYFKVGRHVDAMNEYNKALEIDKQN), 341 to 373 (EALVARGALYATKGSLNKAIEDFELALENCPTH), and 381 to 414 (CQTLVERGGQLEEEEKFLNAESYYKKALTLDETF). The disordered stretch occupies residues 463 to 743 (EEKRLKKKRR…PDSRVKKNLP (281 aa)). Low complexity predominate over residues 475–496 (SSSSSVSSADESVSSSSSSSSS). The segment covering 497-506 (SHKRHKKSKR) has biased composition (basic residues). A compositionally biased stretch (polar residues) spans 539-550 (PTNTSASFLNQK). Residues 551 to 562 (QEVEKLLEKQDR) show a composition bias toward basic and acidic residues. Positions 594-605 (FYNSYKTQAGSS) are enriched in polar residues. Basic and acidic residues-rich tracts occupy residues 606–616 (KTEKPYKSERH) and 629–657 (NSEDKMKASSYRRFEKDTEGRKDHSRRWE). A compositionally biased stretch (polar residues) spans 661–673 (VKYSTSPASSDYS). The residue at position 666 (Ser-666) is a Phosphoserine. A compositionally biased stretch (basic and acidic residues) spans 707–738 (RVYEKEDSCGEGNRNEAPEEMLNSKEQPDSRV).

It belongs to the TTC14 family.

The sequence is that of Tetratricopeptide repeat protein 14 from Mus musculus (Mouse).